The primary structure comprises 350 residues: Methylthioribose-1-phosphate isomerase (350 aa).

Substrate-binding positions include 48–50 (RGA), arginine 93, and glutamine 198. Aspartate 239 (proton donor) is an active-site residue. Residue 249 to 250 (NK) coordinates substrate.

It belongs to the eIF-2B alpha/beta/delta subunits family. MtnA subfamily.

It carries out the reaction 5-(methylsulfanyl)-alpha-D-ribose 1-phosphate = 5-(methylsulfanyl)-D-ribulose 1-phosphate. It participates in amino-acid biosynthesis; L-methionine biosynthesis via salvage pathway; L-methionine from S-methyl-5-thio-alpha-D-ribose 1-phosphate: step 1/6. Catalyzes the interconversion of methylthioribose-1-phosphate (MTR-1-P) into methylthioribulose-1-phosphate (MTRu-1-P). This is Methylthioribose-1-phosphate isomerase from Fervidobacterium nodosum (strain ATCC 35602 / DSM 5306 / Rt17-B1).